The following is a 122-amino-acid chain: Large ribosomal subunit protein uL18 (122 aa).

This sequence belongs to the universal ribosomal protein uL18 family. As to quaternary structure, part of the 50S ribosomal subunit; part of the 5S rRNA/L5/L18/L25 subcomplex. Contacts the 5S and 23S rRNAs.

This is one of the proteins that bind and probably mediate the attachment of the 5S RNA into the large ribosomal subunit, where it forms part of the central protuberance. The polypeptide is Large ribosomal subunit protein uL18 (Syntrophotalea carbinolica (strain DSM 2380 / NBRC 103641 / GraBd1) (Pelobacter carbinolicus)).